Reading from the N-terminus, the 656-residue chain is Very long-chain specific acyl-CoA dehydrogenase, mitochondrial (656 aa).

Residues 1–33 (MQSARMTPSVGRQLLRLGARSSRSTTVLQGQPR) are disordered. The transit peptide at 1–41 (MQSARMTPSVGRQLLRLGARSSRSTTVLQGQPRPISAQRLY) directs the protein to the mitochondrion. The tract at residues 42 to 483 (AREATQAVLD…ALQGCMDKGK (442 aa)) is catalytic. Lysine 52 carries the N6-acetyllysine modification. 2 positions are modified to N6-acetyllysine; alternate: lysine 72 and lysine 128. An N6-succinyllysine; alternate mark is found at lysine 72 and lysine 128. At lysine 196 the chain carries N6-succinyllysine. Residue 215-224 (FCLTEPSSGS) participates in FAD binding. Cysteine 238 bears the S-nitrosocysteine mark. Lysine 240 is modified (N6-acetyllysine; alternate). Lysine 240 carries the N6-succinyllysine; alternate modification. 250 to 252 (WIS) provides a ligand contact to FAD. At lysine 269 the chain carries N6-succinyllysine. N6-acetyllysine; alternate is present on residues lysine 277 and lysine 279. An N6-succinyllysine; alternate mark is found at lysine 277 and lysine 279. Lysine 299 and lysine 317 each carry N6-acetyllysine. At lysine 332 the chain carries N6-acetyllysine; alternate. N6-succinyllysine; alternate is present on lysine 332. Lysine 373 is modified (N6-succinyllysine). A substrate-binding site is contributed by 462-464 (FEG). Glutamate 463 functions as the Proton acceptor in the catalytic mechanism. 465-467 (AND) lines the FAD pocket. At lysine 483 the chain carries N6-acetyllysine; alternate. Lysine 483 carries the post-translational modification N6-succinyllysine; alternate. The tract at residues 484–517 (ELTGLGNALKNPFGNVGLLMGEAGKQLRRRTGIG) is membrane-anchoring. Phosphoserine occurs at positions 518 and 523. An N6-acetyllysine modification is found at lysine 551. Residue lysine 557 is modified to N6-acetyllysine; alternate. Lysine 557 is subject to N6-succinyllysine; alternate. Glutamine 563 serves as a coordination point for FAD. Lysine 640 carries the N6-succinyllysine modification.

Belongs to the acyl-CoA dehydrogenase family. As to quaternary structure, homodimer. Homodimerizes after import into the mitochondrion. It depends on FAD as a cofactor. S-nitrosylation at Cys-238 in liver improves catalytic efficiency.

Its subcellular location is the mitochondrion inner membrane. It carries out the reaction a very-long-chain 2,3-saturated fatty acyl-CoA + oxidized [electron-transfer flavoprotein] + H(+) = a very-long-chain (2E)-enoyl-CoA + reduced [electron-transfer flavoprotein]. The catalysed reaction is dodecanoyl-CoA + oxidized [electron-transfer flavoprotein] + H(+) = (2E)-dodecenoyl-CoA + reduced [electron-transfer flavoprotein]. The enzyme catalyses tetradecanoyl-CoA + oxidized [electron-transfer flavoprotein] + H(+) = (2E)-tetradecenoyl-CoA + reduced [electron-transfer flavoprotein]. It catalyses the reaction oxidized [electron-transfer flavoprotein] + hexadecanoyl-CoA + H(+) = (2E)-hexadecenoyl-CoA + reduced [electron-transfer flavoprotein]. It carries out the reaction octadecanoyl-CoA + oxidized [electron-transfer flavoprotein] + H(+) = (2E)-octadecenoyl-CoA + reduced [electron-transfer flavoprotein]. The catalysed reaction is eicosanoyl-CoA + oxidized [electron-transfer flavoprotein] + H(+) = (2E)-eicosenoyl-CoA + reduced [electron-transfer flavoprotein]. The enzyme catalyses docosanoyl-CoA + oxidized [electron-transfer flavoprotein] + H(+) = (2E)-docosenoyl-CoA + reduced [electron-transfer flavoprotein]. It catalyses the reaction tetracosanoyl-CoA + oxidized [electron-transfer flavoprotein] + H(+) = (2E)-tetracosenoyl-CoA + reduced [electron-transfer flavoprotein]. The protein operates within lipid metabolism; mitochondrial fatty acid beta-oxidation. Its function is as follows. Very long-chain specific acyl-CoA dehydrogenase is one of the acyl-CoA dehydrogenases that catalyze the first step of mitochondrial fatty acid beta-oxidation, an aerobic process breaking down fatty acids into acetyl-CoA and allowing the production of energy from fats. The first step of fatty acid beta-oxidation consists in the removal of one hydrogen from C-2 and C-3 of the straight-chain fatty acyl-CoA thioester, resulting in the formation of trans-2-enoyl-CoA. Among the different mitochondrial acyl-CoA dehydrogenases, very long-chain specific acyl-CoA dehydrogenase acts specifically on acyl-CoAs with saturated 12 to 24 carbons long primary chains. The chain is Very long-chain specific acyl-CoA dehydrogenase, mitochondrial from Mus musculus (Mouse).